The sequence spans 191 residues: Succinoglycan biosynthesis protein ExoI (191 aa).

A disordered region spans residues 1–21; that stretch reads MTRIKSAVAAGGRRAPHSARL.

Its pathway is glycan metabolism; exopolysaccharide biosynthesis. This Rhizobium meliloti (strain 1021) (Ensifer meliloti) protein is Succinoglycan biosynthesis protein ExoI (exoI).